We begin with the raw amino-acid sequence, 571 residues long: Glutamate--tRNA ligase (571 aa).

The 'HIGH' region signature appears at 106 to 116; the sequence is PNPDGAFHLGN.

This sequence belongs to the class-I aminoacyl-tRNA synthetase family. Glutamate--tRNA ligase type 2 subfamily.

The protein resides in the cytoplasm. The catalysed reaction is tRNA(Glu) + L-glutamate + ATP = L-glutamyl-tRNA(Glu) + AMP + diphosphate. Catalyzes the attachment of glutamate to tRNA(Glu) in a two-step reaction: glutamate is first activated by ATP to form Glu-AMP and then transferred to the acceptor end of tRNA(Glu). This Pyrococcus abyssi (strain GE5 / Orsay) protein is Glutamate--tRNA ligase.